The primary structure comprises 286 residues: MSRYKKDNDGVTFLLVCIDIYSRRLFVKTLKSKKGQEVAEALQDVFKEIGVTPMTIYSDDGKEFYNSHVKELLAKNFVNLFSPKSEIKCAIVERANRTLKTRLAKYMTQKYNRRYVDVLQQVVNGINNSVNRGIGKKPVDVERGDFSTPMPVDSVKIKFRVGDHVRIAAKRGQFDKGYEQGWTTEVYMSNSTTTPTAHAPSEESIINGKSIPQPMLAGAIFGVIFGIFCLILHVCLVRYLVKARAKHIPKVRKVKAKKGKKDKKLKESKKSDDTSTGASTGSSIAM.

One can recognise an Integrase catalytic domain in the interval 1 to 146 (MSRYKKDNDG…KPVDVERGDF (146 aa)). The span at 252-263 (RKVKAKKGKKDK) shows a compositional bias: basic residues. A disordered region spans residues 252–286 (RKVKAKKGKKDKKLKESKKSDDTSTGASTGSSIAM). The span at 264 to 273 (KLKESKKSDD) shows a compositional bias: basic and acidic residues. A compositionally biased stretch (low complexity) spans 274-286 (TSTGASTGSSIAM).

This is an uncharacterized protein from Caenorhabditis elegans.